A 329-amino-acid polypeptide reads, in one-letter code: DNA-directed RNA polymerase subunit alpha (329 aa).

The tract at residues 1 to 235 (MVREKVKVST…DLFIPFLHTE (235 aa)) is alpha N-terminal domain (alpha-NTD). The interval 269–329 (IALKYIFIDQ…KQILGILEKK (61 aa)) is alpha C-terminal domain (alpha-CTD).

This sequence belongs to the RNA polymerase alpha chain family. As to quaternary structure, in plastids the minimal PEP RNA polymerase catalytic core is composed of four subunits: alpha, beta, beta', and beta''. When a (nuclear-encoded) sigma factor is associated with the core the holoenzyme is formed, which can initiate transcription.

The protein localises to the plastid. It localises to the chloroplast. It catalyses the reaction RNA(n) + a ribonucleoside 5'-triphosphate = RNA(n+1) + diphosphate. DNA-dependent RNA polymerase catalyzes the transcription of DNA into RNA using the four ribonucleoside triphosphates as substrates. The polypeptide is DNA-directed RNA polymerase subunit alpha (Gossypium hirsutum (Upland cotton)).